Here is a 396-residue protein sequence, read N- to C-terminus: Elongation factor Tu 2 (396 aa).

A tr-type G domain is found at 10 to 206 (KPHVNVGTIG…ALDTYIPTPE (197 aa)). The interval 19–26 (GHVDHGKT) is G1. 19–26 (GHVDHGKT) is a GTP binding site. Residue Thr26 participates in Mg(2+) binding. The G2 stretch occupies residues 60–64 (GITIN). The tract at residues 81–84 (DCPG) is G3. GTP contacts are provided by residues 81–85 (DCPGH) and 136–139 (NKCD). Positions 136–139 (NKCD) are G4. The G5 stretch occupies residues 174-176 (SAK).

It belongs to the TRAFAC class translation factor GTPase superfamily. Classic translation factor GTPase family. EF-Tu/EF-1A subfamily. As to quaternary structure, monomer.

It localises to the cytoplasm. It catalyses the reaction GTP + H2O = GDP + phosphate + H(+). Functionally, GTP hydrolase that promotes the GTP-dependent binding of aminoacyl-tRNA to the A-site of ribosomes during protein biosynthesis. The protein is Elongation factor Tu 2 of Acidovorax sp. (strain JS42).